Consider the following 379-residue polypeptide: C-C chemokine receptor type 7 (379 aa).

A signal peptide spans 1 to 24 (MDLGKPMKNVLVVALLVIFQVCLC). Residues 25–59 (QDEVTDNYIGDNTTVDYTLYESVCFKKDVRNFKAW) are Extracellular-facing. N36 carries N-linked (GlcNAc...) asparagine glycosylation. Residues 60 to 86 (FLPIMYSIICFVGLLGNGLVMLTYIYF) form a helical membrane-spanning segment. Residues 87–95 (KRLKTMTDT) are Cytoplasmic-facing. A helical transmembrane segment spans residues 96–116 (YLLNLALADILFLLTLPFWAY). The Extracellular portion of the chain corresponds to 117-130 (SAAKSWVFGVHVCK). C129 and C210 form a disulfide bridge. Residues 131–152 (LIFGIYKISFFSGMLLLLCISI) traverse the membrane as a helical segment. Residues 153 to 170 (DRYVAIVQAVSAHRHRAR) lie on the Cytoplasmic side of the membrane. A helical membrane pass occupies residues 171–191 (VLLISKLSCLGIWMLAIVLST). At 192 to 219 (PEVMYSGIQKSSSEQALRCSLVTEHVEA) the chain is on the extracellular side. A helical transmembrane segment spans residues 220–247 (LITIQVAQMVVGFLIPLMAMSFCYLVII). At 248-263 (RTLLQARNFERNKAIK) the chain is on the cytoplasmic side. The chain crosses the membrane as a helical span at residues 264–289 (VIIAVVVVFVAFQLPYNGVVLAHTVA). Topologically, residues 290 to 314 (NFNITSGTSCELSKQLNIAYDVTYS) are extracellular. N-linked (GlcNAc...) asparagine glycosylation is present at N292. The helical transmembrane segment at 315-332 (LACVRCCVNPFLYAFIGV) threads the bilayer. Over 333 to 379 (KFRSDLFKLFKDLGCLSQEQLRQWSFCRHTRRSSMSVEAETTTTFSP) the chain is Cytoplasmic.

The protein belongs to the G-protein coupled receptor 1 family.

Its subcellular location is the cell membrane. In terms of biological role, receptor for the MIP-3-beta chemokine. This chain is C-C chemokine receptor type 7 (CCR7), found in Bos taurus (Bovine).